Consider the following 291-residue polypeptide: MNDATATRLDGKALAKQIETELSQRVAAVIKKTGRTPILATILVGDDPASATYVRMKGNACKRVGMESIRVEMPASTTTEQLLAKIDELNNNPDVHGILLQHPVPEQIDERACFDAIDLNKDVDGVTSLGFGRMSMGEPAYGSCTPQGIMYLLERYFLKNGIEFAGKNAVVVGRSAILGKPMAQMLLNANCTVTICHSKTQNLEEHVGRADILVGAVGVPELIKKDWIKPGAIVVDAGFHPTEDGGVGDIELKGIESIAAAYTPVPGGVGPMTINTLIRQTVEAAEKAAQA.

NADP(+) is bound by residues 173–175 (GRS) and Ser198.

The protein belongs to the tetrahydrofolate dehydrogenase/cyclohydrolase family. As to quaternary structure, homodimer.

The catalysed reaction is (6R)-5,10-methylene-5,6,7,8-tetrahydrofolate + NADP(+) = (6R)-5,10-methenyltetrahydrofolate + NADPH. The enzyme catalyses (6R)-5,10-methenyltetrahydrofolate + H2O = (6R)-10-formyltetrahydrofolate + H(+). The protein operates within one-carbon metabolism; tetrahydrofolate interconversion. Catalyzes the oxidation of 5,10-methylenetetrahydrofolate to 5,10-methenyltetrahydrofolate and then the hydrolysis of 5,10-methenyltetrahydrofolate to 10-formyltetrahydrofolate. This is Bifunctional protein FolD from Psychrobacter sp. (strain PRwf-1).